The primary structure comprises 228 residues: uncharacterized protein (228 aa).

The HTH gntR-type domain maps to 11–78 (PPVNQQIYRI…PQRGSYVNKI (68 aa)). The segment at residues 38–57 (EKEVSVRFNVSRQPVREAFI) is a DNA-binding region (H-T-H motif).

This is an uncharacterized protein from Escherichia coli O6:H1 (strain CFT073 / ATCC 700928 / UPEC).